A 118-amino-acid polypeptide reads, in one-letter code: MTVNIYDNANEMASVLKETEQYTAWQNAFNAIQADEEAKQLFTKFQSVQVAVQQMMQSQQQPSADQEKEWDAIAADVQKNELITALLSTEQALNTLLTEINDIVTKPVADAYAKLRQK.

It belongs to the UPF0342 family.

This Leuconostoc citreum (strain KM20) protein is UPF0342 protein LCK_01004.